The following is a 78-amino-acid chain: UPF0349 protein SAHV_0934 (78 aa).

It belongs to the UPF0349 family.

The polypeptide is UPF0349 protein SAHV_0934 (Staphylococcus aureus (strain Mu3 / ATCC 700698)).